Consider the following 188-residue polypeptide: UPF0488 protein C8orf33 homolog (188 aa).

Disordered stretches follow at residues 1–65 (MAAP…AEAQ), 87–112 (QRPT…TPLP), and 144–182 (AHSA…RDEE). N-acetylalanine is present on Ala2. At Ser41 the chain carries Phosphoserine. The span at 166-182 (PRPEGRSKGTSDTRDEE) shows a compositional bias: basic and acidic residues.

It belongs to the UPF0488 family.

In Bos taurus (Bovine), this protein is UPF0488 protein C8orf33 homolog.